Consider the following 990-residue polypeptide: MTIAESSQKSATRKPDSMEPILRLNNIEKSLQDTRDYRGLQLENGLKVLLISDPNTDVSAAALSVQVGHMSDPTNLPGLAHFCEHMLFLGTEKYPHENGYTTYLSQSGGSSNAATYPLMTKYHFHVAPDKLDGALDRFAQFFIAPLFTPSATEREINAVNSEHEKNLPSDLWRIKQVNRHLAKPDHAYSKFGSGNKTTLSEIPKSKNIDVRDELLKFHKQWYSANIMCLAVIGKESLDELEGMVLEKFSEIENKNVKVPGWPRHPYAEERYGQKVKIVPIKDIRSLTISFTTDDLTQFYKSGPDNYLTHLIGHEGKGSILSELRRLGWCNDLMAGHQNTQNGFGFFDIVVDLTQEGLEHVDDIVKIVFQYLEMLRKEGPKKWIFDECVKLNEMRFRFKEKEQPENLVTHAVSSMQIFPLEEVLIAPYLSNEWRPDLIKGLLDELVPSKSRIVIVSQSFEPDCDLAEPYYKTKYGITRVAKDTVQSWENCELNENLKLALPNSFIPTNFDISDVPADAPKHPTIILDTPILRVWHKQDNQFNKPKACMTFDMSNPIAYLDPLNCNLNHMMVMLLKDQLNEYLYDAELASLKLSVMGKSCGIDFTIRGFSDKQVVLLEKLLDHLFDFSIDEKRFDILKEEYVRSLKNFKAEQPYQHSIYYLALLLTENAWANMELLDAMELVTYDRVLNFAKEFFQRLHTECFIFGNVTKQQATDIAGRVNTRLEATNASKLPILARQMLKKREYKLLAGDSYLFEKENEFHKSSCAQLYLQCGAQTDHTNIMVNLVSQVLSEPCYDCLRTKEQLGYIVFSGVRKVNGANGIRIIVQSAKHPSYVEDRIENFLQTYLQVIEDMPLDEFERHKEALAVKKLEKPKTIFQQFSQFYGEIAMQTYHFEREEAEVAILRKISKADFVDYFKKFIAKDGEERRVLSVHIVSQQTDENATSEAEPVEITNMERHKPISDIVTFKSCKELYPIALPFLDIKAKGARSKL.

Histidine 81 contributes to the Zn(2+) binding site. Glutamate 84 functions as the Proton acceptor in the catalytic mechanism. Residues histidine 85 and glutamate 162 each coordinate Zn(2+).

Belongs to the peptidase M16 family. Zn(2+) serves as cofactor.

The catalysed reaction is Degradation of insulin, glucagon and other polypeptides. No action on proteins.. Functionally, can cleave insulin and TGF-alpha. This Drosophila melanogaster (Fruit fly) protein is Insulin-degrading enzyme (Ide).